The sequence spans 73 residues: Translation initiation factor IF-1 (73 aa).

An S1-like domain is found at 1–72; sequence MAKEDVIEVE…TKGRITYRFI (72 aa).

It belongs to the IF-1 family. Component of the 30S ribosomal translation pre-initiation complex which assembles on the 30S ribosome in the order IF-2 and IF-3, IF-1 and N-formylmethionyl-tRNA(fMet); mRNA recruitment can occur at any time during PIC assembly.

It localises to the cytoplasm. One of the essential components for the initiation of protein synthesis. Stabilizes the binding of IF-2 and IF-3 on the 30S subunit to which N-formylmethionyl-tRNA(fMet) subsequently binds. Helps modulate mRNA selection, yielding the 30S pre-initiation complex (PIC). Upon addition of the 50S ribosomal subunit IF-1, IF-2 and IF-3 are released leaving the mature 70S translation initiation complex. The protein is Translation initiation factor IF-1 of Lactobacillus johnsonii (strain CNCM I-12250 / La1 / NCC 533).